The primary structure comprises 124 residues: Type-4 ice-structuring protein (124 aa).

Positions 1-20 (MKFSLIAAVALLALAQGSFA) are cleaved as a signal peptide. Glutamine 21 is modified (pyrrolidone carboxylic acid).

Belongs to the apolipoprotein A1/A4/E family.

It is found in the secreted. Its function is as follows. Antifreeze proteins lower the blood freezing point. This chain is Type-4 ice-structuring protein, found in Paralichthys olivaceus (Bastard halibut).